We begin with the raw amino-acid sequence, 217 residues long: Probable nicotinate-nucleotide adenylyltransferase (217 aa).

This sequence belongs to the NadD family.

The enzyme catalyses nicotinate beta-D-ribonucleotide + ATP + H(+) = deamido-NAD(+) + diphosphate. Its pathway is cofactor biosynthesis; NAD(+) biosynthesis; deamido-NAD(+) from nicotinate D-ribonucleotide: step 1/1. Its function is as follows. Catalyzes the reversible adenylation of nicotinate mononucleotide (NaMN) to nicotinic acid adenine dinucleotide (NaAD). The sequence is that of Probable nicotinate-nucleotide adenylyltransferase from Dechloromonas aromatica (strain RCB).